A 266-amino-acid chain; its full sequence is MDEVLSFKRGRVPLLISMPHPGTRLTPAVDAGLVEEARALTDTDWHIPRLYDFAEELGASTLAAHYSRYVVDLNRPSDDKPLYSTATTGLYPDTLFDGRPLYREGMAPSAEERMRYLAEVWTPYHRTIAEELARLKAEFGYALLWDAHSIRSHVPHLFDGRLPDFNLGTNAGASCDPALAARLEAVCAAAEGYSHVLNGRFKGGHITRHYGQPEQHVHAVQLELAQCTYMDEQAPFAYRADLAEATRAVIRELLESLLAWGRERYA.

Belongs to the N-formylglutamate deformylase family. As to quaternary structure, monomer.

The catalysed reaction is N-formyl-L-glutamate + H2O = formate + L-glutamate. It participates in amino-acid degradation; L-histidine degradation into L-glutamate; L-glutamate from N-formimidoyl-L-glutamate (deiminase route): step 2/2. Its function is as follows. Catalyzes the hydrolysis of N-formyl-L-glutamate to formate and L-glutamate. Shows weak activity with N-formyl-L-glutamine. The polypeptide is N-formylglutamate deformylase (Pseudomonas aeruginosa (strain ATCC 15692 / DSM 22644 / CIP 104116 / JCM 14847 / LMG 12228 / 1C / PRS 101 / PAO1)).